A 526-amino-acid polypeptide reads, in one-letter code: Probable feruloyl esterase B-2 (526 aa).

Positions 1-18 (MTKLSLLPLLTLASAVLA) are cleaved as a signal peptide. 2 cysteine pairs are disulfide-bonded: Cys-27-Cys-74 and Cys-62-Cys-113. N-linked (GlcNAc...) asparagine glycosylation is present at Asn-52. The N-linked (GlcNAc...) asparagine glycan is linked to Asn-137. Intrachain disulfides connect Cys-186/Cys-441, Cys-255/Cys-272, Cys-281/Cys-291, and Cys-503/Cys-525. The Acyl-ester intermediate role is filled by Ser-187. Asn-233 carries an N-linked (GlcNAc...) asparagine glycan. Ca(2+) is bound by residues Asp-256, Asp-259, Ala-261, Asp-263, and Ile-265. The N-linked (GlcNAc...) asparagine glycan is linked to Asn-311. Residues Asp-400 and His-440 each act as charge relay system in the active site. Asn-516 is a glycosylation site (N-linked (GlcNAc...) asparagine).

Belongs to the tannase family.

The protein localises to the secreted. It carries out the reaction feruloyl-polysaccharide + H2O = ferulate + polysaccharide.. Functionally, involved in degradation of plant cell walls. Hydrolyzes the feruloyl-arabinose ester bond in arabinoxylans as well as the feruloyl-galactose and feruloyl-arabinose ester bonds in pectin. This is Probable feruloyl esterase B-2 (faeB-2) from Aspergillus fumigatus (strain CBS 144.89 / FGSC A1163 / CEA10) (Neosartorya fumigata).